Consider the following 210-residue polypeptide: MAIERYFIREAVKEMLIDEFLEKELRRAGYGGLDIKKTPLGTKVIIFAANPGYVIGRGGRRIRELTRILERQFGLENPQIDVQEIKNPYLNAKVQAVRIAQALERGIHFRRAAYAAMRAIMSNGARGVEIRISGKLTGERAKSVRFYQGYLAKVGNPAETLVSKGYAQALLKLGVIGVKVAIMPPDARLPDEIEIIEKPVEEEVSSNEAE.

One can recognise a KH type-2 domain in the interval 17 to 86 (IDEFLEKELR…NPQIDVQEIK (70 aa)).

It belongs to the universal ribosomal protein uS3 family. Part of the 30S ribosomal subunit.

Functionally, binds the lower part of the 30S subunit head. This chain is Small ribosomal subunit protein uS3, found in Pyrococcus abyssi (strain GE5 / Orsay).